A 362-amino-acid chain; its full sequence is Protein BIG GRAIN 1-like D (362 aa).

Disordered stretches follow at residues 22–113 (IDPK…TLFH), 132–168 (KFNRHDENWENTRNRRSVKSSGNQKKPKTPASPGGRI), and 303–327 (VKTNGFEDYEDDDEDDDDDDVASDS). Polar residues predominate over residues 23–47 (DPKTQKTQPYVGSVNTTTKKQSIVT). The segment covering 50-60 (VPDRKIHRDRF) has biased composition (basic and acidic residues). Over residues 63–78 (SVSSSSDSNSSIFSSS) the composition is skewed to low complexity. Residues 132-144 (KFNRHDENWENTR) are compositionally biased toward basic and acidic residues. Over residues 309-324 (EDYEDDDEDDDDDDVA) the composition is skewed to acidic residues.

The protein belongs to the BIG GRAIN 1 (BG1) plant protein family.

The protein resides in the cell membrane. Its function is as follows. Involved in auxin transport. Regulator of the auxin signaling pathway. The polypeptide is Protein BIG GRAIN 1-like D (Arabidopsis thaliana (Mouse-ear cress)).